The primary structure comprises 723 residues: Catalase-peroxidase (723 aa).

Residues 97–225 (WHAAGSYRVT…LAAVQMGLIY (129 aa)) constitute a cross-link (tryptophyl-tyrosyl-methioninium (Trp-Tyr) (with M-251)). The active-site Proton acceptor is the H98. Residues 225–251 (YVNPEGVNGKSDPLATAAQMRETFARM) constitute a cross-link (tryptophyl-tyrosyl-methioninium (Tyr-Met) (with W-97)). H266 lines the heme b pocket.

Belongs to the peroxidase family. Peroxidase/catalase subfamily. In terms of assembly, homodimer or homotetramer. The cofactor is heme b. In terms of processing, formation of the three residue Trp-Tyr-Met cross-link is important for the catalase, but not the peroxidase activity of the enzyme.

It carries out the reaction H2O2 + AH2 = A + 2 H2O. The catalysed reaction is 2 H2O2 = O2 + 2 H2O. Functionally, bifunctional enzyme with both catalase and broad-spectrum peroxidase activity. The chain is Catalase-peroxidase from Agrobacterium fabrum (strain C58 / ATCC 33970) (Agrobacterium tumefaciens (strain C58)).